We begin with the raw amino-acid sequence, 483 residues long: Cytochrome P450 monooxygenase stcF (483 aa).

Cys424 is a binding site for heme.

It belongs to the cytochrome P450 family. Heme serves as cofactor.

It functions in the pathway mycotoxin biosynthesis; sterigmatocystin biosynthesis. In terms of biological role, cytochrome P450 monooxygenase; part of the gene cluster that mediates the biosynthesis of sterigmatocystin (ST), a polyketide-derived furanocoumarin which is part of the most toxic and carcinogenic compounds among the known mycotoxins. The first step in the biosynthesis of sterigmatocystin is the production of hexanoate by the fatty acid synthase (FAS) units stcJ and stcK. The polyketide backbone is assembled by the non-reducing polyketide synthase stcA by condensation of the starter hexanoyl-CoA and 7 malonyl-CoA extender units followed by cyclization and release of norsolorinic acid. Norsolorinic acid is the first stable intermediate in the biosynthesis of sterigmatocystin and is converted into averantin (AVN) by the ketoreductase stcE which reduces the hexanoate ketone to an alcohol. Averantin is then oxidized into 5'-hydroxyaverantin (HAVN) by the cytochrome P450 monooxygenase stcF. 5'-hydroxyaverantin is further converted to 5'-oxyaverantin (OAVN) by the 5'-hydroxyaverantin dehydrogenase stcG. The next step is the conversion of OAVN into averufin (AVF) which is catalyzed by a yet to be identified enzyme. The cytochrome P450 monooxygenase stcB and the flavin-binding monooxygenase stcW are both required for the conversion of averufin to 1-hydroxyversicolorone. The esterase stcI probably catalyzes the formation of versiconal hemiacetal acetate from 1-hydroxyversicolorone. The oxydoreductase stcN then probably catalyzes the biosynthetic step from versiconal to versicolorin B (VERB). The next step is performed by the versicolorin B desaturase stcL to produce versicolorin A (VERA). The ketoreductase stcU and the cytochrome P450 monooxygenase stcS are involved in the conversion of versicolorin A to demethylsterigmatocystin. The Baeyer-Villiger oxidas stcQ and the reductase stcR might be involved in the biosynthetic step from versicolorin A to demethylsterigmatocystin. The final step in the biosynthesis of sterigmatocystin is the methylation of demethylsterigmatocystin catalyzed by the methyltransferase stcP. This is Cytochrome P450 monooxygenase stcF from Emericella nidulans (strain FGSC A4 / ATCC 38163 / CBS 112.46 / NRRL 194 / M139) (Aspergillus nidulans).